A 203-amino-acid polypeptide reads, in one-letter code: Dephospho-CoA kinase (203 aa).

Residues 10-203 form the DPCK domain; it reads IIGITGNIGS…LTGGAKGGRG (194 aa). Position 18-23 (18-23) interacts with ATP; the sequence is GSGKST.

Belongs to the CoaE family.

It localises to the cytoplasm. It catalyses the reaction 3'-dephospho-CoA + ATP = ADP + CoA + H(+). The protein operates within cofactor biosynthesis; coenzyme A biosynthesis; CoA from (R)-pantothenate: step 5/5. In terms of biological role, catalyzes the phosphorylation of the 3'-hydroxyl group of dephosphocoenzyme A to form coenzyme A. This is Dephospho-CoA kinase from Thermus thermophilus (strain ATCC BAA-163 / DSM 7039 / HB27).